The following is a 233-amino-acid chain: Large ribosomal subunit protein uL1 (233 aa).

Belongs to the universal ribosomal protein uL1 family. In terms of assembly, part of the 50S ribosomal subunit.

Functionally, binds directly to 23S rRNA. The L1 stalk is quite mobile in the ribosome, and is involved in E site tRNA release. In terms of biological role, protein L1 is also a translational repressor protein, it controls the translation of the L11 operon by binding to its mRNA. The protein is Large ribosomal subunit protein uL1 of Proteus vulgaris.